We begin with the raw amino-acid sequence, 306 residues long: MKDEHIAVLMGGFSSERSVSLSSGTACADVLEAQGYRVSRVDVDGHIASVLEQLQPDIAFNALHGPFGEDGRIQGVLEYLKIPYTHSGVMASALAMDKGRAKIVVASVGVSIAPSCVMSRFAVGKEHPMEPPYVIKPVCEGSSLGVIIVKENESVPSLNVVGSEWVYADTVIVEKYIPGRELTCAVMGNKALDVCEILPEKHFQFYDYDSKYKSGGSLHVCPAQLSSNIYQNVQRMSLAAHQAIGCRGVSRSDFRFDEETGELVWLEINTQPGMTPTSLFPDIAKASGRTYGDIVQWMVEDASCMR.

One can recognise an ATP-grasp domain in the interval 102–300 (KIVVASVGVS…YGDIVQWMVE (199 aa)). 128–183 (PMEPPYVIKPVCEGSSLGVIIVKENESVPSLNVVGSEWVYADTVIVEKYIPGRELT) is a binding site for ATP. Residues D253, E267, and N269 each contribute to the Mg(2+) site.

It belongs to the D-alanine--D-alanine ligase family. Mg(2+) is required as a cofactor. Requires Mn(2+) as cofactor.

It localises to the cytoplasm. The catalysed reaction is 2 D-alanine + ATP = D-alanyl-D-alanine + ADP + phosphate + H(+). The protein operates within cell wall biogenesis; peptidoglycan biosynthesis. Cell wall formation. This chain is D-alanine--D-alanine ligase, found in Bartonella henselae (strain ATCC 49882 / DSM 28221 / CCUG 30454 / Houston 1) (Rochalimaea henselae).